A 106-amino-acid chain; its full sequence is Toxin-like structure LSTX-D5 (106 aa).

Residues 1-20 (MMKVLVVVALLVTLISYSSS) form the signal peptide. Residues 21 to 41 (EGIDDLETDELLSLMANEQTR) constitute a propeptide that is removed on maturation. Intrachain disulfides connect cysteine 45–cysteine 60, cysteine 52–cysteine 69, cysteine 59–cysteine 85, and cysteine 71–cysteine 83.

Belongs to the neurotoxin 19 (CSTX) family. 02 (D7) subfamily. As to expression, expressed by the venom gland.

The protein resides in the secreted. The sequence is that of Toxin-like structure LSTX-D5 from Lycosa singoriensis (Wolf spider).